Consider the following 219-residue polypeptide: Cytidylate kinase (219 aa).

An ATP-binding site is contributed by 15–23; it reads GPAASGKGT.

This sequence belongs to the cytidylate kinase family. Type 1 subfamily.

The protein localises to the cytoplasm. It carries out the reaction CMP + ATP = CDP + ADP. It catalyses the reaction dCMP + ATP = dCDP + ADP. In Brucella suis biovar 1 (strain 1330), this protein is Cytidylate kinase.